The sequence spans 319 residues: tRNA dimethylallyltransferase (319 aa).

15–22 contributes to the ATP binding site; sequence GPTASGKS. A substrate-binding site is contributed by 17-22; it reads TASGKS. Interaction with substrate tRNA regions lie at residues 40–43 and 164–168; these read DSRQ and QRLVR.

It belongs to the IPP transferase family. In terms of assembly, monomer. Requires Mg(2+) as cofactor.

The enzyme catalyses adenosine(37) in tRNA + dimethylallyl diphosphate = N(6)-dimethylallyladenosine(37) in tRNA + diphosphate. In terms of biological role, catalyzes the transfer of a dimethylallyl group onto the adenine at position 37 in tRNAs that read codons beginning with uridine, leading to the formation of N6-(dimethylallyl)adenosine (i(6)A). In Chlorobium phaeobacteroides (strain DSM 266 / SMG 266 / 2430), this protein is tRNA dimethylallyltransferase.